The following is a 437-amino-acid chain: Repulsive guidance molecule B (437 aa).

The signal sequence occupies residues 1–45; it reads MGLRAAPSSAAAAAAEVEQRRSPGLCPPPLELLLLLLFSLGLLHA. An N-linked (GlcNAc...) asparagine glycan is attached at N120. Residues 121–133 show a composition bias toward polar residues; it reads CSKDGPTSSTNPE. A disordered region spans residues 121–153; that stretch reads CSKDGPTSSTNPEVTHDPCNYHSHAGAREHRRG. Disulfide bonds link C139–C226 and C163–C312. N-linked (GlcNAc...) asparagine glycosylation occurs at N383. N413 is lipidated: GPI-anchor amidated asparagine. The propeptide at 414–437 is removed in mature form; sequence GTPRGGSDLSVSLGLTCLILIVFL.

The protein belongs to the repulsive guidance molecule (RGM) family. Homooligomer. Interacts with DRGX. Interacts with BMP2 and BMP4. Interacts with the BMP type I receptors ACVR1, BMPR1A and BMPR1B and with the BMP type II receptor ACVR2B. The functional complex with its receptor NEO1/neogenin appears to be a heterotetramer with a 2:2 stoichiometry, RGM molecules acting as staples that bring two NEO1 receptors together without interacting themselves, this arrangement leads to activation of downstream signaling via RhoA. GPI-anchored. Post-translationally, autocatalytically cleaved at low pH; the two chains remain linked via two disulfide bonds.

It is found in the cell membrane. The protein resides in the membrane raft. Functionally, member of the repulsive guidance molecule (RGM) family that contributes to the patterning of the developing nervous system. Acts as a bone morphogenetic protein (BMP) coreceptor that potentiates BMP signaling. Promotes neuronal adhesion. May inhibit neurite outgrowth. The protein is Repulsive guidance molecule B of Homo sapiens (Human).